A 901-amino-acid polypeptide reads, in one-letter code: Phosphatidylinositol 3-kinase catalytic subunit type 3 (901 aa).

The 169-residue stretch at 21–189 (LQTNVQVKVA…DLLFKQVTRQ (169 aa)) folds into the C2 PI3K-type domain. The region spanning 302 to 527 (RHRQVKPNKQ…SKMYQNIQDR (226 aa)) is the PIK helical domain. The region spanning 607-886 (IPDTASFFKS…QIESSLNAKM (280 aa)) is the PI3K/PI4K catalytic domain. Residues 613–619 (FFKSEMM) form a G-loop region. Positions 755–763 (GLGDRHLDN) are catalytic loop. Positions 774 to 795 (HVDFGFILGRDPKPMPPPMKLT) are activation loop.

Belongs to the PI3/PI4-kinase family. As to quaternary structure, interacts with bec-1. May interact with dyn-1. It depends on Mn(2+) as a cofactor. Ubiquitous.

It is found in the nucleus outer membrane. The protein resides in the cytoplasm. The protein localises to the cytoplasmic granule. Its subcellular location is the cell projection. It localises to the phagocytic cup. It carries out the reaction a 1,2-diacyl-sn-glycero-3-phospho-(1D-myo-inositol) + ATP = a 1,2-diacyl-sn-glycero-3-phospho-(1D-myo-inositol-3-phosphate) + ADP + H(+). Inhibited by wortmannin. Functionally, catalytic subunit of the PI3K complex that mediates formation of phosphatidylinositol 3-phosphate. Together with bec-1, mediates the production of phosphatidylinositol 3-phosphate on intracellular vesicles and thereby regulates membrane trafficking. Plays a role in endosome-to-Golgi retrograde transport of mig-14. Involved in clearance of apoptotic cell corpses by phagosomes. Phagosome maturation requires two sequential and non-overlapping pulses of phosphatidylinositol-3-phosphate (PI3P) on the vesicle surface which mediates recruitment of sortins snx-1 and lst-4 and small GTPases rab-5, rab-2 and rab-7, downstream of dynamin dyn-1. The first pulse is initiated by piki-1, then maintained by vps-34 which also produces the second pulse. Required for embryonic development. Together with bec-1, involved in L3/L4 larval molting stage probably by regulating cuticle shedding. Regulates the expansion of the nucleus outer membrane. Involved in the secretion and localization of lrp-1 at the apical surface of hyp7 syncytium. May regulate endocytosis in hypodermal cells. May play a role in the formation of gut granules (a lysosome-related organelle). Plays a role in germ stem cell proliferation during larval development. This is Phosphatidylinositol 3-kinase catalytic subunit type 3 from Caenorhabditis elegans.